The chain runs to 228 residues: Urease accessory protein UreE (228 aa).

Positions 193-228 are disordered; sequence HGSGLHIHGIHSHGDGHSHSHDDHDHDHNHDHDHKH. Over residues 204–228 the composition is skewed to basic and acidic residues; sequence SHGDGHSHSHDDHDHDHNHDHDHKH.

The protein belongs to the UreE family.

It is found in the cytoplasm. In terms of biological role, involved in urease metallocenter assembly. Binds nickel. Probably functions as a nickel donor during metallocenter assembly. The polypeptide is Urease accessory protein UreE (Yersinia rohdei).